The sequence spans 296 residues: Phosphatidylglycerol--prolipoprotein diacylglyceryl transferase (296 aa).

Residues 1–21 (MRHRRRPGGRSTAGGTPVSQL) are disordered. Transmembrane regions (helical) follow at residues 34 to 54 (GPLTIHIYALCILAGIVVAYI), 72 to 92 (ELCALAVIAGIIGGRLYHVIT), 108 to 128 (FFIWQGGLGIWGAISLGGLAI), 136 to 158 (GIRFASVADSLAPGILAAQAIGR), 195 to 215 (FHPTFLYELVWSLVGAVFLLW), 227 to 243 (LFTLYVAIYTFGRFWVE), and 258 to 278 (LNDVTALVVFTGAVVILIVLQ). R158 is an a 1,2-diacyl-sn-glycero-3-phospho-(1'-sn-glycerol) binding site.

This sequence belongs to the Lgt family.

The protein localises to the cell membrane. The catalysed reaction is L-cysteinyl-[prolipoprotein] + a 1,2-diacyl-sn-glycero-3-phospho-(1'-sn-glycerol) = an S-1,2-diacyl-sn-glyceryl-L-cysteinyl-[prolipoprotein] + sn-glycerol 1-phosphate + H(+). It participates in protein modification; lipoprotein biosynthesis (diacylglyceryl transfer). Its function is as follows. Catalyzes the transfer of the diacylglyceryl group from phosphatidylglycerol to the sulfhydryl group of the N-terminal cysteine of a prolipoprotein, the first step in the formation of mature lipoproteins. The polypeptide is Phosphatidylglycerol--prolipoprotein diacylglyceryl transferase (Cutibacterium acnes (strain DSM 16379 / KPA171202) (Propionibacterium acnes)).